A 51-amino-acid chain; its full sequence is Sperm protamine P1 (51 aa).

Belongs to the protamine P1 family. Testis.

It is found in the nucleus. The protein localises to the chromosome. In terms of biological role, protamines substitute for histones in the chromatin of sperm during the haploid phase of spermatogenesis. They compact sperm DNA into a highly condensed, stable and inactive complex. The sequence is that of Sperm protamine P1 (PRM1) from Colobus guereza (Mantled guereza).